Consider the following 494-residue polypeptide: Glutamyl-tRNA(Gln) amidotransferase subunit A (494 aa).

Catalysis depends on charge relay system residues Lys-80 and Ser-160. The disordered stretch occupies residues 140–168; the sequence is GNVISPWRRPGDTAPLAPGGSSGGSSSAV. Catalysis depends on Ser-184, which acts as the Acyl-ester intermediate.

This sequence belongs to the amidase family. GatA subfamily. In terms of assembly, heterotrimer of A, B and C subunits.

It catalyses the reaction L-glutamyl-tRNA(Gln) + L-glutamine + ATP + H2O = L-glutaminyl-tRNA(Gln) + L-glutamate + ADP + phosphate + H(+). Functionally, allows the formation of correctly charged Gln-tRNA(Gln) through the transamidation of misacylated Glu-tRNA(Gln) in organisms which lack glutaminyl-tRNA synthetase. The reaction takes place in the presence of glutamine and ATP through an activated gamma-phospho-Glu-tRNA(Gln). The protein is Glutamyl-tRNA(Gln) amidotransferase subunit A of Novosphingobium aromaticivorans (strain ATCC 700278 / DSM 12444 / CCUG 56034 / CIP 105152 / NBRC 16084 / F199).